Reading from the N-terminus, the 437-residue chain is GTPase Obg (437 aa).

An Obg domain is found at 2–160 (SMFLDTAKIS…RQLELELKIL (159 aa)). Residues 161-338 (ADVGLVGFPS…LLEATAELLA (178 aa)) enclose the OBG-type G domain. GTP-binding positions include 167–174 (GFPSVGKS), 192–196 (FTTIV), 214–217 (DLPG), 284–287 (NKMD), and 319–321 (SSL). Residues Ser174 and Thr194 each coordinate Mg(2+). The OCT domain maps to 359–437 (GFAKTEKDFE…IGKFEFEFVD (79 aa)).

It belongs to the TRAFAC class OBG-HflX-like GTPase superfamily. OBG GTPase family. As to quaternary structure, monomer. It depends on Mg(2+) as a cofactor.

It is found in the cytoplasm. Its function is as follows. An essential GTPase which binds GTP, GDP and possibly (p)ppGpp with moderate affinity, with high nucleotide exchange rates and a fairly low GTP hydrolysis rate. Plays a role in control of the cell cycle, stress response, ribosome biogenesis and in those bacteria that undergo differentiation, in morphogenesis control. The protein is GTPase Obg of Streptococcus pyogenes serotype M2 (strain MGAS10270).